The chain runs to 205 residues: uncharacterized protein (205 aa).

Residues 1–63 (MQRTRELESS…QHPKVAKFLK (63 aa)) are Cytoplasmic-facing. The chain crosses the membrane as a helical span at residues 64-84 (VQLVFDLISLFIFATHQLLLL). The Extracellular segment spans residues 85–124 (EDGNFGKHYFKRKTKRCSKFSCSRCNANAHHPKWFKFKHS). Residues 125–145 (LLCLGTFCFGVYSLVKINKFF) traverse the membrane as a helical segment. Topologically, residues 146–205 (KTDQTVDLNRLLELFFWQLNAILNMKLFAFYGDHLESHSAPLDVYEDSFANKSSSGGDEV) are cytoplasmic.

The protein resides in the membrane. This is an uncharacterized protein from Saccharomyces cerevisiae (strain ATCC 204508 / S288c) (Baker's yeast).